The chain runs to 62 residues: Photosystem II reaction center X protein (62 aa).

A helical transmembrane segment spans residues 26–46 (IASFFAAALLIVIPAATFLIF).

This sequence belongs to the PsbX family. Type 2 subfamily. PSII consists of a core antenna complex that captures photons, and an electron transfer chain that converts photonic excitation into a charge separation. PSII forms dimeric complexes.

The protein resides in the cellular thylakoid membrane. In terms of biological role, involved in the binding and/or turnover of quinones at the Q(B) site of Photosystem II. This is Photosystem II reaction center X protein from Prochlorococcus marinus (strain MIT 9515).